Here is a 968-residue protein sequence, read N- to C-terminus: RNA polymerase-associated protein RapA (968 aa).

The Helicase ATP-binding domain occupies 163-332 (EVGRRYAPRV…FARLRLLDPD (170 aa)). 176–183 (DEVGLGKT) is an ATP binding site. The DEAH box motif lies at 278-281 (DEAH). The region spanning 491-641 (RVDWLIAFLK…AFELTCPSGH (151 aa)) is the Helicase C-terminal domain.

Belongs to the SNF2/RAD54 helicase family. RapA subfamily. Interacts with the RNAP. Has a higher affinity for the core RNAP than for the holoenzyme. Its ATPase activity is stimulated by binding to RNAP.

Functionally, transcription regulator that activates transcription by stimulating RNA polymerase (RNAP) recycling in case of stress conditions such as supercoiled DNA or high salt concentrations. Probably acts by releasing the RNAP, when it is trapped or immobilized on tightly supercoiled DNA. Does not activate transcription on linear DNA. Probably not involved in DNA repair. This chain is RNA polymerase-associated protein RapA, found in Shewanella denitrificans (strain OS217 / ATCC BAA-1090 / DSM 15013).